The chain runs to 388 residues: Ferrochelatase (388 aa).

Histidine 196 and glutamate 277 together coordinate Fe cation.

Belongs to the ferrochelatase family.

The protein resides in the cytoplasm. It carries out the reaction heme b + 2 H(+) = protoporphyrin IX + Fe(2+). Its pathway is porphyrin-containing compound metabolism; protoheme biosynthesis; protoheme from protoporphyrin-IX: step 1/1. Catalyzes the ferrous insertion into protoporphyrin IX. This chain is Ferrochelatase, found in Nostoc punctiforme (strain ATCC 29133 / PCC 73102).